The following is a 727-amino-acid chain: Broad-complex core protein isoforms 1/2/3/4/5 (727 aa).

Positions 32–97 constitute a BTB domain; it reads VDVTLACEGR…IYHGEVNVHQ (66 aa). Residues 135–149 show a composition bias toward polar residues; it reads NSGGRTPLNTHTQSL. Disordered stretches follow at residues 135–185, 218–378, 445–496, 532–583, and 604–626; these read NSGG…SLPS, RGSD…IGDG, INNS…RPTA, PQQQ…ANTP, and STSG…SGGL. The segment covering 227–238 has biased composition (low complexity); that stretch reads SGAVGSGSNNNS. Over residues 281-298 the composition is skewed to gly residues; it reads TGNGNSGNGNGNGNGASN. Positions 341–355 are enriched in basic and acidic residues; the sequence is NDEHSNDSTGEHDAN. Composition is skewed to low complexity over residues 445 to 460, 475 to 495, and 533 to 568; these read INNS…NNNN, TPSP…TRPT, and QQQQ…QQQQ. C2H2-type zinc fingers lie at residues 636–659 and 666–689; these read FRCN…QNVH and PVCN…SIYH. The interval 694-727 is disordered; sequence QPKQEPGVGATQAAANSFYHQQHQQQQLNHHSSS. Positions 713 to 727 are enriched in low complexity; sequence HQQHQQQQLNHHSSS.

It localises to the nucleus. Its function is as follows. Broad-complex proteins are required for puffing and transcription of salivary gland late genes during metamorphosis. This is Broad-complex core protein isoforms 1/2/3/4/5 (br) from Drosophila melanogaster (Fruit fly).